A 92-amino-acid chain; its full sequence is MSRSVWKGPFVDSYVLKKAEKSKESGRNEVIKIWSRRSTILPQFVGLTFGVYNGRKHIPVNVTEDMIGQKFGEYSPTRTYYGHAADKKAKRK.

This sequence belongs to the universal ribosomal protein uS19 family.

Functionally, protein S19 forms a complex with S13 that binds strongly to the 16S ribosomal RNA. This Jannaschia sp. (strain CCS1) protein is Small ribosomal subunit protein uS19.